A 393-amino-acid chain; its full sequence is Sulfate adenylyltransferase (393 aa).

It belongs to the sulfate adenylyltransferase family.

The enzyme catalyses sulfate + ATP + H(+) = adenosine 5'-phosphosulfate + diphosphate. It functions in the pathway sulfur metabolism; hydrogen sulfide biosynthesis; sulfite from sulfate: step 1/3. The sequence is that of Sulfate adenylyltransferase from Symbiobacterium thermophilum (strain DSM 24528 / JCM 14929 / IAM 14863 / T).